A 656-amino-acid polypeptide reads, in one-letter code: Nuclear pore complex protein Nup85 (656 aa).

Residue Met1 is modified to N-acetylmethionine. Lys92 bears the N6-acetyllysine mark. Phosphoserine is present on Ser223.

It belongs to the nucleoporin Nup85 family. In terms of assembly, component of the nuclear pore complex (NPC). Component of the NPC Nup107-160 subcomplex, consisting of at least NUP107, NUP98/Nup96, NUP160, NUP133, NUP85, NUP37, NUP43 and SEC13. Interacts with NUP160, NUP133 and SEC13. Interacts with NUP37, NUP107 and NUP43. Interacts with CCR2.

The protein resides in the nucleus. It localises to the nuclear pore complex. Its subcellular location is the chromosome. It is found in the centromere. The protein localises to the kinetochore. The protein resides in the cytoplasm. It localises to the cytoskeleton. Its subcellular location is the spindle. It is found in the nucleus membrane. Essential component of the nuclear pore complex (NPC) that seems to be required for NPC assembly and maintenance. As part of the NPC Nup107-160 subcomplex plays a role in RNA export and in tethering NUP96/Nup98 and NUP153 to the nucleus. The Nup107-160 complex seems to be required for spindle assembly during mitosis. NUP85 is required for membrane clustering of CCL2-activated CCR2. Seems to be involved in CCR2-mediated chemotaxis of monocytes and may link activated CCR2 to the phosphatidyl-inositol 3-kinase-Rac-lammellipodium protrusion cascade. Involved in nephrogenesis. The sequence is that of Nuclear pore complex protein Nup85 (NUP85) from Homo sapiens (Human).